Here is a 1270-residue protein sequence, read N- to C-terminus: Myosin-3 (1270 aa).

The disordered stretch occupies residues 1-20 (MAVIKKGARRKDVKEPKKRS). The region spanning 36 to 715 (VGVSDLTLLS…SLFALEDMRD (680 aa)) is the Myosin motor domain. 129–136 (GESGAGKT) contributes to the ATP binding site. Ser357 is modified (phosphoserine). An actin-binding region spans residues 404-486 (SIGILDIYGF…PGILAAMNDS (83 aa)). 2 IQ domains span residues 719–739 (YNMA…RIDA) and 740–765 (AIKI…YGTK). One can recognise a TH1 domain in the interval 771 to 961 (KERRSMSLLG…TIYVRRGHPA (191 aa)). Disordered regions lie at residues 951 to 1015 (STIY…QKPV), 1029 to 1136 (YNPK…GSSS), and 1215 to 1270 (VQFG…DDDW). Positions 980 to 1000 (IKSKKSKHKSTHKHTHSHRSH) are enriched in basic residues. A compositionally biased stretch (low complexity) spans 1066–1078 (KKASSSHKSSSAK). Positions 1089 to 1098 (GVEKNKEPLK) are enriched in basic and acidic residues. Residues 1107 to 1116 (PIPPPPPPMG) show a composition bias toward pro residues. Residues 1118–1180 (PKDPKFEAAY…PTAYMTPYKD (63 aa)) enclose the SH3 domain. Over residues 1215 to 1234 (VQFGSATVGPTSDNQSNPVG) the composition is skewed to polar residues. Over residues 1256 to 1270 (ADDDDNDDGDDDDDW) the composition is skewed to acidic residues.

The protein belongs to the TRAFAC class myosin-kinesin ATPase superfamily. Myosin family. As to quaternary structure, interacts (via myosin motor domain) with SHE4; this interaction is important for proper localization and may regulate the interaction of the motor domain with actin. Interacts (via SH3 domain) with VRP1; this interaction is required for localization to sites of polarized growth and may regulate the interaction of the tail domain with actin. Interacts (via SH3 domain) with PAN1; this interaction is important for late stages of endocytopsis. Interacts (via SH3 domain) with BBC1 and LAS17. Interacts (via C-terminal acidic tail) with ARC19 and ARC40; ARC19 and ARC40 are Arp2/3 complex subunits. Phosphorylation of the TEDS site (Ser-357) is required for the polarization of the actin cytoskeleton and for ligand-induced, but not for constitutive internalization of STE2. Phosphorylation probably activates the myosin-I ATPase. Ser-357 is phosphorylated by CLA4 and STE20 in vitro.

It localises to the cytoplasm. The protein localises to the cytoskeleton. It is found in the actin patch. One of two redundant type-I myosins implicated in the organization of the actin cytoskeleton. Required for proper actin cytoskeleton polarization and for the internalization step in endocytosis. At the cell cortex, assembles in patch-like structures together with proteins from the actin-polymerizing machinery and promotes actin assembly. Functions redundantly with LAS17 as actin nucleation-promoting factor (NPF) for the Arp2/3 complex. Motor domain phosphorylation by PAK kinases CLA4 and STE20 promotes CDC42-regulated actin assembly. Functions together with the NPF PAN1 in late stages of endocytosis. Motor domain phosphorylation by PDK1 kinases PKH1 and PKH2, and by SGK kinases YPK1 and YPK2, promotes ligand-induced, but not constitutive endocytosis of the G protein-coupled receptor STE2. In Saccharomyces cerevisiae (strain YJM789) (Baker's yeast), this protein is Myosin-3 (MYO3).